Consider the following 64-residue polypeptide: Copper-specific metallothionein-2 (64 aa).

Residues Cys3, Cys5, Cys9, Cys11, Cys16, Cys18, Cys22, Cys24, Cys27, Cys33, Cys40, Cys44, Cys50, Cys52, Cys56, and Cys58 each contribute to the Cu(+) site.

This sequence belongs to the metallothionein superfamily. Type 2 family.

Its function is as follows. The metallothioneins are involved in the cellular sequestration of toxic metal ions and regulation of essential trace elements. This isoform binds exclusively copper. This chain is Copper-specific metallothionein-2, found in Callinectes sapidus (Blue crab).